Consider the following 305-residue polypeptide: Putative S-adenosyl-L-methionine-dependent methyltransferase MAB_4607c (305 aa).

Residues Asp-128 and 155–156 contribute to the S-adenosyl-L-methionine site; that span reads DL.

Belongs to the UPF0677 family.

Its function is as follows. Exhibits S-adenosyl-L-methionine-dependent methyltransferase activity. The sequence is that of Putative S-adenosyl-L-methionine-dependent methyltransferase MAB_4607c from Mycobacteroides abscessus (strain ATCC 19977 / DSM 44196 / CCUG 20993 / CIP 104536 / JCM 13569 / NCTC 13031 / TMC 1543 / L948) (Mycobacterium abscessus).